Here is a 911-residue protein sequence, read N- to C-terminus: DNA ligase 4 (911 aa).

Residues glutamate 271, threonine 272, lysine 273, leucine 274, arginine 278, glutamate 331, lysine 345, phenylalanine 367, glutamate 427, lysine 432, lysine 449, and lysine 451 each contribute to the ATP site. Lysine 273 serves as the catalytic N6-AMP-lysine intermediate. Glutamate 331 contacts Mg(2+). Residue glutamate 427 participates in Mg(2+) binding. The tract at residues leucine 610–aspartate 620 is required for catalytic activity. BRCT domains are found at residues lysine 654–methionine 743 and serine 808–isoleucine 911.

Belongs to the ATP-dependent DNA ligase family. In terms of assembly, interacts with XRCC4; the LIG4-XRCC4 subcomplex has a 1:2 stoichiometry and XRCC4 is required for LIG4 stability. Component of the core long-range non-homologous end joining (NHEJ) complex (also named DNA-PK complex) composed of PRKDC, LIG4, XRCC4, XRCC6/Ku70, XRCC5/Ku86 and NHEJ1/XLF. Additional component of the NHEJ complex includes PAXX. Following autophosphorylation, PRKDC dissociates from DNA, leading to formation of the short-range NHEJ complex, composed of LIG4, XRCC4, XRCC6/Ku70, XRCC5/Ku86 and NHEJ1/XLF. Interacts with DCLRE1C; the interaction is direct. Interacts with APLF. It depends on Mg(2+) as a cofactor. As to expression, testis, thymus, prostate and heart.

Its subcellular location is the nucleus. The enzyme catalyses ATP + (deoxyribonucleotide)n-3'-hydroxyl + 5'-phospho-(deoxyribonucleotide)m = (deoxyribonucleotide)n+m + AMP + diphosphate.. In terms of biological role, DNA ligase involved in DNA non-homologous end joining (NHEJ); required for double-strand break (DSB) repair and V(D)J recombination. Catalyzes the NHEJ ligation step of the broken DNA during DSB repair by resealing the DNA breaks after the gap filling is completed. Joins single-strand breaks in a double-stranded polydeoxynucleotide in an ATP-dependent reaction. LIG4 is mechanistically flexible: it can ligate nicks as well as compatible DNA overhangs alone, while in the presence of XRCC4, it can ligate ends with 2-nucleotides (nt) microhomology and 1-nt gaps. Forms a subcomplex with XRCC4; the LIG4-XRCC4 subcomplex is responsible for the NHEJ ligation step and XRCC4 enhances the joining activity of LIG4. Binding of the LIG4-XRCC4 complex to DNA ends is dependent on the assembly of the DNA-dependent protein kinase complex DNA-PK to these DNA ends. LIG4 regulates nuclear localization of XRCC4. In Homo sapiens (Human), this protein is DNA ligase 4.